A 229-amino-acid chain; its full sequence is Extracellular small neutral protease (229 aa).

The N-terminal stretch at 1–28 is a signal peptide; it reads MRMPLSVLTAAGLSLATLGLGTAGPASA. Positions 29–81 are excised as a propeptide; that stretch reads TPTAEGAPVVAYDGSPSAGSPADAKAEAAANRAFFEAVLRSVAEKRAANPKST. The Ca(2+) site is built by Asp-159 and Thr-161. Residue His-166 coordinates Zn(2+). The active site involves Glu-167. His-170 and Asp-176 together coordinate Zn(2+). Residues Cys-182 and Cys-195 are joined by a disulfide bond.

Belongs to the peptidase M7 family. Monomer. It depends on Ca(2+) as a cofactor. The cofactor is Zn(2+).

It localises to the secreted. The catalysed reaction is Hydrolyzes proteins with a preference for Tyr or Phe in the P1' position. Has no action on amino-acid p-nitroanilides.. Its function is as follows. Milk hydrolyzing. The polypeptide is Extracellular small neutral protease (snpA) (Streptomyces sp. (strain C5)).